The chain runs to 572 residues: Proline dehydrogenase 1, mitochondrial (572 aa).

Residues 105 to 124 (NHSNQTNNVNNKNYNNNNNN) are compositionally biased toward low complexity. The segment at 105-140 (NHSNQTNNVNNKNYNNNNNNFEKDDKFGPPNNQNNN) is disordered.

This sequence belongs to the proline oxidase family. Requires FAD as cofactor.

It is found in the mitochondrion matrix. It carries out the reaction L-proline + a quinone = (S)-1-pyrroline-5-carboxylate + a quinol + H(+). It participates in amino-acid degradation; L-proline degradation into L-glutamate; L-glutamate from L-proline: step 1/2. Functionally, converts proline to delta-1-pyrroline-5-carboxylate. This is Proline dehydrogenase 1, mitochondrial (prodh) from Dictyostelium discoideum (Social amoeba).